A 532-amino-acid chain; its full sequence is Bifunctional purine biosynthesis protein PurH (532 aa).

In terms of domain architecture, MGS-like spans 1-148 (MQTPKPIKRA…KNHKDVTIVV (148 aa)).

The protein belongs to the PurH family.

The catalysed reaction is (6R)-10-formyltetrahydrofolate + 5-amino-1-(5-phospho-beta-D-ribosyl)imidazole-4-carboxamide = 5-formamido-1-(5-phospho-D-ribosyl)imidazole-4-carboxamide + (6S)-5,6,7,8-tetrahydrofolate. It catalyses the reaction IMP + H2O = 5-formamido-1-(5-phospho-D-ribosyl)imidazole-4-carboxamide. Its pathway is purine metabolism; IMP biosynthesis via de novo pathway; 5-formamido-1-(5-phospho-D-ribosyl)imidazole-4-carboxamide from 5-amino-1-(5-phospho-D-ribosyl)imidazole-4-carboxamide (10-formyl THF route): step 1/1. It functions in the pathway purine metabolism; IMP biosynthesis via de novo pathway; IMP from 5-formamido-1-(5-phospho-D-ribosyl)imidazole-4-carboxamide: step 1/1. This is Bifunctional purine biosynthesis protein PurH from Alteromonas mediterranea (strain DSM 17117 / CIP 110805 / LMG 28347 / Deep ecotype).